The following is an 894-amino-acid chain: Myb-like protein K (894 aa).

Positions Leu-93–Ser-139 are enriched in low complexity. Disordered stretches follow at residues Leu-93–Ser-221, Gln-299–Thr-353, Gln-492–Ile-539, and Ala-601–Ser-659. The segment covering Pro-140 to Gln-149 has biased composition (polar residues). A compositionally biased stretch (low complexity) spans Asn-150–Ser-221. The span at Val-300–Asp-309 shows a compositional bias: polar residues. Composition is skewed to low complexity over residues Met-310–Thr-353 and Gln-492–Met-527. Composition is skewed to basic and acidic residues over residues Gly-611–Asp-640 and Ala-649–Ser-659. The HTH myb-type domain occupies Ala-649–Lys-704. A DNA-binding region (H-T-H motif) is located at residues Tyr-677–Leu-700. The tract at residues Gln-703 to Ser-852 is disordered. 3 stretches are compositionally biased toward low complexity: residues Thr-710–Ile-742, Gln-751–Gln-805, and Pro-815–Asn-845.

It localises to the nucleus. This chain is Myb-like protein K (mybK), found in Dictyostelium discoideum (Social amoeba).